The chain runs to 227 residues: MKVSYHGHSVVKIETNGKVILIDPFLTGNSKTDLKAEDVKVDAILLSHGHGDHVGDTVELAKKNNAVVVAPFELATFLSWQGVNTHPMHIGGSHEFDFGKVKFTQAFHGSSYIDEENKTITYTGMPAGILFTAEEKTVYHAGDTALFSDMKLIGELNNIDVAFLPIGDNFTMGPEDAVLAAKWVQAKTVVPIHYNTFPVIEQDPYQFVEKLQNCTGKVLEAGESITL.

This sequence belongs to the UPF0173 family.

The polypeptide is UPF0173 metal-dependent hydrolase BALH_4194 (Bacillus thuringiensis (strain Al Hakam)).